The following is a 550-amino-acid chain: Hydroxylamine reductase (550 aa).

The [2Fe-2S] cluster site is built by Cys3, Cys6, Cys18, and Cys25. His249, Glu273, Cys317, Cys405, Cys433, Cys458, Glu492, and Lys494 together coordinate hybrid [4Fe-2O-2S] cluster. Cys405 is modified (cysteine persulfide).

Belongs to the HCP family. The cofactor is [2Fe-2S] cluster. Hybrid [4Fe-2O-2S] cluster serves as cofactor.

It localises to the cytoplasm. The catalysed reaction is A + NH4(+) + H2O = hydroxylamine + AH2 + H(+). In terms of biological role, catalyzes the reduction of hydroxylamine to form NH(3) and H(2)O. The protein is Hydroxylamine reductase of Escherichia coli O17:K52:H18 (strain UMN026 / ExPEC).